Reading from the N-terminus, the 194-residue chain is Lymphocyte antigen 6 complex locus protein G5b (194 aa).

A signal peptide spans 1–18 (MRACVLVHVLTMVGFALG). Residues 26-118 (RTCHLCFLED…SAQHQSTLPG (93 aa)) enclose the UPAR/Ly6 domain. Intrachain disulfides connect C28/C55, C31/C40, C47/C73, C81/C98, and C99/C104. N182 is a glycosylation site (N-linked (GlcNAc...) asparagine).

Post-translationally, N-glycosylated.

The protein localises to the secreted. This chain is Lymphocyte antigen 6 complex locus protein G5b (Ly6g5b), found in Rattus norvegicus (Rat).